Reading from the N-terminus, the 142-residue chain is Matrix protein (142 aa).

GMP is bound by residues 64–66 (DVE) and alanine 117.

In terms of assembly, homooligomer. Homotetramer. Interacts with phosphoprotein P. Binds to ssRNA. In terms of processing, not glycosylated.

The protein localises to the virion. The protein resides in the host cytoplasm. Its subcellular location is the host cell membrane. In terms of biological role, plays a crucial role in virion assembly and budding. The sequence is that of Matrix protein (M) from Bos taurus (Bovine).